The chain runs to 187 residues: Macro domain-containing protein MM_0177 (187 aa).

In terms of domain architecture, Macro spans valine 8–leucine 187.

Belongs to the MacroD-type family.

This chain is Macro domain-containing protein MM_0177, found in Methanosarcina mazei (strain ATCC BAA-159 / DSM 3647 / Goe1 / Go1 / JCM 11833 / OCM 88) (Methanosarcina frisia).